A 462-amino-acid chain; its full sequence is UDP-N-acetylmuramate--L-alanine ligase (462 aa).

114-120 contacts ATP; the sequence is GSHGKTT.

Belongs to the MurCDEF family.

The protein resides in the cytoplasm. It catalyses the reaction UDP-N-acetyl-alpha-D-muramate + L-alanine + ATP = UDP-N-acetyl-alpha-D-muramoyl-L-alanine + ADP + phosphate + H(+). It participates in cell wall biogenesis; peptidoglycan biosynthesis. Functionally, cell wall formation. This chain is UDP-N-acetylmuramate--L-alanine ligase, found in Brachyspira hyodysenteriae (strain ATCC 49526 / WA1).